Here is a 1781-residue protein sequence, read N- to C-terminus: BCL-6 corepressor-like protein 1 (1781 aa).

Disordered regions lie at residues 64–136 and 337–362; these read AVGS…SHSR and ASTP…GPPS. Composition is skewed to polar residues over residues 66-82 and 127-136; these read GSGS…NTTE and PDSTEASHSR. Ser490 bears the Phosphoserine mark. The segment covering 521 to 531 has biased composition (low complexity); that stretch reads SCTSPSSSTNS. Disordered stretches follow at residues 521 to 545, 561 to 616, 733 to 777, 869 to 895, and 933 to 960; these read SCTS…LADT, LLPA…EMPL, NRDP…STVK, PLGS…PEQD, and QPSS…TPKM. Residues 581–594 show a composition bias toward polar residues; sequence TDQQTEGTSVTFSP. Phosphoserine occurs at positions 593 and 607. Residue Lys741 forms a Glycyl lysine isopeptide (Lys-Gly) (interchain with G-Cter in SUMO2) linkage. At Ser1024 the chain carries Phosphoserine. A Glycyl lysine isopeptide (Lys-Gly) (interchain with G-Cter in SUMO2) cross-link involves residue Lys1087. Residues 1100–1484 form a disordered region; the sequence is WQPDEETESL…PTARQIPPEA (385 aa). Basic and acidic residues predominate over residues 1116–1127; sequence CNKEKEIEEEPR. Ser1162 is subject to Phosphoserine. Residues 1176–1185 show a composition bias toward basic residues; that stretch reads VRGKHKHRKP. Residues 1195–1213 are compositionally biased toward basic and acidic residues; sequence KRTDGHEEGSLEKKAKNSF. Polar residues predominate over residues 1222 to 1234; the sequence is STRTRSQSGSICS. Basic and acidic residues-rich tracts occupy residues 1271-1284 and 1297-1307; these read TQRD…HAQD and RAREMPWRTEA. Positions 1314–1324 are enriched in acidic residues; the sequence is TNEEEEDDEEE. Residues 1328–1339 show a composition bias toward basic residues; sequence KRKKRRRQKSRK. A compositionally biased stretch (basic and acidic residues) spans 1350–1362; sequence EEQRRKGRADSKA. Polar residues-rich tracts occupy residues 1381 to 1394 and 1437 to 1449; these read LLLS…SDSP and RWSQ…SKSP. ANK repeat units follow at residues 1493-1523, 1527-1556, and 1560-1589; these read AGET…DVNH, AGYT…NVNC, and DGTR…DPTL. Positions 1664-1781 are PCGF Ub-like fold domain (PUFD); required for the interaction with the KDM2B-SKP1 heterodimeric complex; it reads DDFMFELSDK…SEVEYQSWSS (118 aa).

It belongs to the BCOR family. Interacts with PCGF1, forming heterodimers. The PCGF1-BCORL1 heterodimeric complex interacts with the KDM2B-SKP1 heterodimeric complex to form a homotetrameric polycomb repression complex 1 (PRC1.1). Interacts with SKP1. Interacts with CTBP1, HDAC4, HDAC5 and HDAC7. As to expression, highly expressed in lung and testis.

The protein resides in the nucleus. Transcriptional corepressor. May specifically inhibit gene expression when recruited to promoter regions by sequence specific DNA-binding proteins such as BCL6. This repression may be mediated at least in part by histone deacetylase activities which can associate with this corepressor. This Mus musculus (Mouse) protein is BCL-6 corepressor-like protein 1 (Bcorl1).